The sequence spans 239 residues: Sugar fermentation stimulation protein homolog (239 aa).

Belongs to the SfsA family.

The sequence is that of Sugar fermentation stimulation protein homolog from Methanobrevibacter smithii (strain ATCC 35061 / DSM 861 / OCM 144 / PS).